A 159-amino-acid polypeptide reads, in one-letter code: Cathelicidin-5 (159 aa).

Positions 1–29 are cleaved as a signal peptide; it reads METQRASLSLGRWSLWLLLLGLALPSASA. Q30 bears the Pyrrolidone carboxylic acid mark. A propeptide spanning residues 30–131 is cleaved from the precursor; that stretch reads QALSYREAVL…DITCAVPQSV (102 aa). Disulfide bonds link C86-C97 and C108-C125.

It belongs to the cathelicidin family.

Its subcellular location is the secreted. In terms of biological role, exerts a potent antimicrobial activity against Gram-negative and Gram-positive bacteria, including methicillin-resistant Staphylococcus aureus, and fungi. In Bos taurus (Bovine), this protein is Cathelicidin-5 (CATHL5).